Reading from the N-terminus, the 264-residue chain is 1H-3-hydroxy-4-oxoquinoline 2,4-dioxygenase (264 aa).

Substrate contacts are provided by residues 30–32, 94–95, and Trp-153; these read WCQ and TS. His-244 acts as the Proton donor/acceptor in catalysis.

It belongs to the AB hydrolase superfamily. The cofactor is None. Contrary to most other dioxygenases, this enzyme does not require a cofactor for catalysis..

It catalyses the reaction 3-hydroxy-1H-quinolin-4-one + O2 = N-formylanthranilate + CO + H(+). Functionally, ring-cleaving dioxygenase involved in oxoquinoline degradation and utilization. This chain is 1H-3-hydroxy-4-oxoquinoline 2,4-dioxygenase (qdo), found in Pseudomonas putida (Arthrobacter siderocapsulatus).